The primary structure comprises 410 residues: Histone-lysine N-methyltransferase SUV39H2 (410 aa).

The region spanning 47–105 is the Chromo domain; the sequence is YEVEYLCDYKVVKDMEYYLVKWKGWPDSTNTWEPLQNLKCPLLLQQFFNDKHNYLSQVK. A Pre-SET domain is found at 189–247; sequence FGCSCTDCFFEKCCPAEAGVLLAYNKNQQIKIPPGTPIYECNSRCQCGPDCPNRIVQKG. Zn(2+) contacts are provided by Cys-191, Cys-193, Cys-196, Cys-201, Cys-202, Cys-229, Cys-233, Cys-235, and Cys-239. The SET domain maps to 250–373; that stretch reads YSLCIFRTSN…AGEELTFDYQ (124 aa). S-adenosyl-L-methionine contacts are provided by residues 261 to 263, Tyr-304, and 330 to 331; these read CGW and NH. Residue Cys-333 participates in Zn(2+) binding. A phosphoserine mark is found at Ser-381, Ser-384, and Ser-388. The Post-SET domain occupies 394-410; that stretch reads ARTVCKCGAVTCRGYLN. Cys-398, Cys-400, and Cys-405 together coordinate Zn(2+).

This sequence belongs to the class V-like SAM-binding methyltransferase superfamily. Histone-lysine methyltransferase family. Suvar3-9 subfamily. As to quaternary structure, interacts with SMAD5. The large PER complex involved in the histone methylation is composed of at least PER2, CBX3, TRIM28, SUV39H1 and/or SUV39H2; CBX3 mediates the formation of the complex. Post-translationally, ubiquitinated by the DCX(DCAF13) E3 ubiquitin ligase complex, leading to its degradation.

The protein localises to the nucleus. It is found in the chromosome. Its subcellular location is the centromere. It carries out the reaction L-lysyl(9)-[histone H3] + 3 S-adenosyl-L-methionine = N(6),N(6),N(6)-trimethyl-L-lysyl(9)-[histone H3] + 3 S-adenosyl-L-homocysteine + 3 H(+). In terms of biological role, histone methyltransferase that specifically trimethylates 'Lys-9' of histone H3 using monomethylated H3 'Lys-9' as substrate. H3 'Lys-9' trimethylation represents a specific tag for epigenetic transcriptional repression by recruiting HP1 (CBX1, CBX3 and/or CBX5) proteins to methylated histones. Mainly functions in heterochromatin regions, thereby playing a central role in the establishment of constitutive heterochromatin at pericentric and telomere regions. H3 'Lys-9' trimethylation is also required to direct DNA methylation at pericentric repeats. SUV39H1 is targeted to histone H3 via its interaction with RB1 and is involved in many processes, such as cell cycle regulation, transcriptional repression and regulation of telomere length. May participate in regulation of higher-order chromatin organization during spermatogenesis. Recruited by the large PER complex to the E-box elements of the circadian target genes such as PER2 itself or PER1, contributes to the conversion of local chromatin to a heterochromatin-like repressive state through H3 'Lys-9' trimethylation. The polypeptide is Histone-lysine N-methyltransferase SUV39H2 (SUV39H2) (Bos taurus (Bovine)).